Here is a 611-residue protein sequence, read N- to C-terminus: MPILRSATSTQGRNMAGARALWRATGMKENDFGKPIIAVVNSFTQFVPGHVHLRDMGKLVAEQIEAAGGVAKEFNTIAVDDGIAMGHGGMLYSLPSRDLIADSVEYMVNAHCADAMVCISNCDKITPGMLMAAMRLNIPAVFVSGGPMEAGKTKLSNQLIKLDLVDAMMKSADKTVCDDDVDAIEKSACPTCGSCSGMFTANSMNCLTEALGLSLPGNGSMLATHADRKELFLTAGRQIVELCKRYYEQDDASVLPRSIATKAAFENAMSLDIAMGGSTNTVLHLLAAAQEAEVDFTMADIDRLSRKVPCLSKVAPNTNKYHMEDVHRAGGIMAILGELERADLLHSDTRTVLGMTIGEQIAKYDITLTKDEAVHKFFRAGPAGIRTTKAFSQDCRWDTVDDDRQNGCIRSKEFAYSQDGGLAMLTGNIALDGCIVKTAGVDESILKFTGDAIVFESQEEAVEGILGGKVRAGHVVIIRYEGPKGGPGMQEMLYPTTYLKSIGLGKECALLTDGRFSGGTSGLSIGHCSPEAASGGTIGLVRDGDKIAIDIPNRSIQLLVSDEELAVRRAEQDAKGWKPANRQREVSMALKMFGHFATSADKGAVRDKTKL.

Asp-81 contributes to the Mg(2+) binding site. Cys-122 contributes to the [2Fe-2S] cluster binding site. Mg(2+)-binding residues include Asp-123 and Lys-124. Residue Lys-124 is modified to N6-carboxylysine. A [2Fe-2S] cluster-binding site is contributed by Cys-195. Residue Glu-491 participates in Mg(2+) binding. The active-site Proton acceptor is Ser-517.

This sequence belongs to the IlvD/Edd family. In terms of assembly, homodimer. [2Fe-2S] cluster is required as a cofactor. Requires Mg(2+) as cofactor.

The enzyme catalyses (2R)-2,3-dihydroxy-3-methylbutanoate = 3-methyl-2-oxobutanoate + H2O. It carries out the reaction (2R,3R)-2,3-dihydroxy-3-methylpentanoate = (S)-3-methyl-2-oxopentanoate + H2O. The protein operates within amino-acid biosynthesis; L-isoleucine biosynthesis; L-isoleucine from 2-oxobutanoate: step 3/4. Its pathway is amino-acid biosynthesis; L-valine biosynthesis; L-valine from pyruvate: step 3/4. Functions in the biosynthesis of branched-chain amino acids. Catalyzes the dehydration of (2R,3R)-2,3-dihydroxy-3-methylpentanoate (2,3-dihydroxy-3-methylvalerate) into 2-oxo-3-methylpentanoate (2-oxo-3-methylvalerate) and of (2R)-2,3-dihydroxy-3-methylbutanoate (2,3-dihydroxyisovalerate) into 2-oxo-3-methylbutanoate (2-oxoisovalerate), the penultimate precursor to L-isoleucine and L-valine, respectively. This chain is Dihydroxy-acid dehydratase, found in Actinobacillus pleuropneumoniae serotype 3 (strain JL03).